We begin with the raw amino-acid sequence, 236 residues long: Bax inhibitor 1 (236 aa).

The Cytoplasmic segment spans residues 1–29 (MNIFDRKINFDALFKFSHITPSTQQHLKK). Lys7 is covalently cross-linked (Glycyl lysine isopeptide (Lys-Gly) (interchain with G-Cter in ubiquitin)). The chain crosses the membrane as a helical span at residues 30 to 50 (VYASFALCMFVAAAGAYIHVV). The Lumenal portion of the chain corresponds to 51 to 52 (TH). A helical membrane pass occupies residues 53–73 (FIQAGLLSALGSLGLMIWLMA). At 74–86 (TPHSHETEQKRLG) the chain is on the cytoplasmic side. A helical transmembrane segment spans residues 87–107 (LLAGFAFLTGVGLGPALDLCI). Residues 108-112 (AINPS) lie on the Lumenal side of the membrane. The helical transmembrane segment at 113–133 (ILPTAFMGTAMIFTCFTLSAL) threads the bilayer. Residues 134–139 (YARRRS) are Cytoplasmic-facing. Residues 140 to 160 (YLFLGGILMSAMSLMLLSSLG) traverse the membrane as a helical segment. Over 161 to 166 (NLFFGS) the chain is Lumenal. Residues 167-187 (VWLFQANLYMGLVVMCGFVLF) form a helical membrane-spanning segment. Over 188-206 (DTQLIIEKAENGDKDYIWH) the chain is Cytoplasmic. An intramembrane region (helical) is located at residues 207–227 (CVDLFLDFVTLFRKLMMILAM). Residues 228-236 (NEKDKKKKK) are Cytoplasmic-facing.

The protein belongs to the BI1 family. Interacts with BCL2 and BCL2L1. Interacts with ERN1. Post-translationally, ubiquitinated by BFAR, leading to proteasomal degradation.

It localises to the endoplasmic reticulum membrane. Its function is as follows. Endoplasmic reticulum (ER)-resident protein that confers cellular protection as an anti-apoptotic protein by limiting multiple stress-inducing pathways surrounding the endoplasmic reticulum and mitochondria. Inhibits the activities of the key sensor for the endoplasmic reticulum unfolded protein response IRE1alpha/ERN1 both directly and by blocking BAX/BAK binding. Modulates ER calcium homeostasis by acting as a calcium-leak channel. Negatively regulates autophagy and autophagosome formation, especially during periods of nutrient deprivation, and reduces cell survival during starvation. This Bos taurus (Bovine) protein is Bax inhibitor 1 (TMBIM6).